A 286-amino-acid chain; its full sequence is MAENTMWHETLHDQFGQYFAVDNVLYHEKTDHQDLIIFENAAFGRVMALDGVVQTTERDEFIYHEMMTHVPLLAHGHAKHVLIIGGGDGAMLREVTRHKNVETITMVEIDAGVVSFCRQYLPNHNAGSYDDPRFTLVIDDGVNFVNQTHQTFDVIISDCTDPIGPGESLFTSAFYEGCKRCLNPGGIFVAQNGVCFLQQDEALDSHRKLSHYFSDVGFYQAAIPTYYGGIMTFAWATDNGALRHLSSEIIQARFHAAGLKCRYYNPAIHAAAFALPQYLHDALSAQ.

The PABS domain maps to 5-238 (TMWHETLHDQ…GIMTFAWATD (234 aa)). Gln-33 lines the S-methyl-5'-thioadenosine pocket. Positions 64 and 88 each coordinate spermidine. S-methyl-5'-thioadenosine-binding positions include Glu-108 and 140-141 (DG). The active-site Proton acceptor is the Asp-158. 158-161 (DCTD) is a spermidine binding site. S-methyl-5'-thioadenosine is bound at residue Pro-165.

The protein belongs to the spermidine/spermine synthase family. Homodimer or homotetramer.

It is found in the cytoplasm. The catalysed reaction is S-adenosyl 3-(methylsulfanyl)propylamine + putrescine = S-methyl-5'-thioadenosine + spermidine + H(+). It participates in amine and polyamine biosynthesis; spermidine biosynthesis; spermidine from putrescine: step 1/1. In terms of biological role, catalyzes the irreversible transfer of a propylamine group from the amino donor S-adenosylmethioninamine (decarboxy-AdoMet) to putrescine (1,4-diaminobutane) to yield spermidine. The chain is Polyamine aminopropyltransferase from Salmonella newport (strain SL254).